The primary structure comprises 386 residues: Probable serine/threonine-protein kinase PBL23 (386 aa).

Cys-5 is lipidated: S-palmitoyl cysteine. The 279-residue stretch at 82–360 (FNPDNQLGEG…SDVVTALEYL (279 aa)) folds into the Protein kinase domain. Residues 88 to 96 (LGEGGFGRV) and Lys-111 each bind ATP. The active-site Proton acceptor is Asp-210. Residues 365–386 (TEEDGQTVEGEEEEEEDERSKL) are disordered. The span at 368-386 (DGQTVEGEEEEEEDERSKL) shows a compositional bias: acidic residues.

It belongs to the protein kinase superfamily. Ser/Thr protein kinase family.

The protein localises to the cell membrane. The enzyme catalyses L-seryl-[protein] + ATP = O-phospho-L-seryl-[protein] + ADP + H(+). It catalyses the reaction L-threonyl-[protein] + ATP = O-phospho-L-threonyl-[protein] + ADP + H(+). In terms of biological role, may be involved in plant defense signaling. This Arabidopsis thaliana (Mouse-ear cress) protein is Probable serine/threonine-protein kinase PBL23.